Reading from the N-terminus, the 402-residue chain is Argininosuccinate synthase (402 aa).

9–17 lines the ATP pocket; the sequence is AYSGGLDTS. Tyrosine 86 contacts L-citrulline. Residue glycine 116 coordinates ATP. L-aspartate is bound by residues threonine 118, asparagine 122, and aspartate 123. Asparagine 122 is a binding site for L-citrulline. Residues arginine 126, serine 174, serine 183, glutamate 259, and tyrosine 271 each contribute to the L-citrulline site.

This sequence belongs to the argininosuccinate synthase family. Type 1 subfamily. Homotetramer.

The protein resides in the cytoplasm. The catalysed reaction is L-citrulline + L-aspartate + ATP = 2-(N(omega)-L-arginino)succinate + AMP + diphosphate + H(+). Its pathway is amino-acid biosynthesis; L-arginine biosynthesis; L-arginine from L-ornithine and carbamoyl phosphate: step 2/3. The sequence is that of Argininosuccinate synthase from Anoxybacillus flavithermus (strain DSM 21510 / WK1).